We begin with the raw amino-acid sequence, 217 residues long: MOB kinase activator 3A (217 aa).

Residues Cys83, Cys88, His165, and His170 each contribute to the Zn(2+) site.

The protein belongs to the MOB1/phocein family.

Its function is as follows. May regulate the activity of kinases. In Bos taurus (Bovine), this protein is MOB kinase activator 3A (MOB3A).